The sequence spans 86 residues: Translation initiation factor IF-1 3 (86 aa).

One can recognise an S1-like domain in the interval Met1–Ile72.

This sequence belongs to the IF-1 family. As to quaternary structure, component of the 30S ribosomal translation pre-initiation complex which assembles on the 30S ribosome in the order IF-2 and IF-3, IF-1 and N-formylmethionyl-tRNA(fMet); mRNA recruitment can occur at any time during PIC assembly.

The protein resides in the cytoplasm. Its function is as follows. One of the essential components for the initiation of protein synthesis. Stabilizes the binding of IF-2 and IF-3 on the 30S subunit to which N-formylmethionyl-tRNA(fMet) subsequently binds. Helps modulate mRNA selection, yielding the 30S pre-initiation complex (PIC). Upon addition of the 50S ribosomal subunit IF-1, IF-2 and IF-3 are released leaving the mature 70S translation initiation complex. The sequence is that of Translation initiation factor IF-1 3 from Acidovorax sp. (strain JS42).